Here is a 404-residue protein sequence, read N- to C-terminus: MDFYQEYITTIHDFCIDKEQLVKRIEGLKVSRPASLIIPILYKEVENPPLKKIITDLNECTYLSQVVIALAAETTEQYVHVVEYFKDLKLPHIVVWCDGPRIKQIIFDMKKKGIDLTSFKGKGKDVWIATGIATLESYAIAYHDADIVTYSVDLPAKLLYPIVETELNFFFNKGYYARINLDSMTMHGRVFRLFVRPLLDTLQSESNADILRYFLAFRYTLAGEFAMTSDLAMNIRIPADWGLEVGLLAEVYRNATTKKICQIDLGYYDHKHQELGVNRSEGLCKMVSDIFTTFMRVVTESTDNRISESYLHGIHVRYKRLGQDLIRRYHADALCNGLYYNRHEEEIYVDMFARVIRKAGDDYRHDPSDVLMPDWTRALSAVPDLREKLYEACIADVKEYCEKK.

Residue Asp146 coordinates a divalent metal cation. Gly188–Val190 lines the (2R)-3-phosphoglycerate pocket. His270 serves as a coordination point for a divalent metal cation.

The protein belongs to the glycosyltransferase 2 family. Mn(2+) serves as cofactor. It depends on Co(2+) as a cofactor. Mg(2+) is required as a cofactor.

It catalyses the reaction an NDP-alpha-D-glucose + (2R)-3-phosphoglycerate = (2R)-2-O-(alpha-D-glucopyranosyl)-3-phospho-glycerate + a ribonucleoside 5'-diphosphate + H(+). Involved in the biosynthesis of 6-O-methylglucose lipopolysaccarides (MGLPs). Catalyzes the transfer of a glucose (Glc) moiety from uridine diphosphate (UDP-Glc) to the position 2 of 3-phospho-D-glycerate (3-PGA) to form glucosyl-3-phosphoglycerate (GPG). This chain is Glucosyl-3-phosphoglycerate synthase, found in Methanococcoides burtonii (strain DSM 6242 / NBRC 107633 / OCM 468 / ACE-M).